A 199-amino-acid polypeptide reads, in one-letter code: NAD(P)H dehydrogenase (quinone) (199 aa).

The region spanning 4–190 (VLVLYYSAYG…AGARYQGKTI (187 aa)) is the Flavodoxin-like domain. FMN is bound by residues 10 to 15 (SAYGHI) and 78 to 80 (TRF). Tyr12 serves as a coordination point for NAD(+). Residue Trp98 coordinates substrate. FMN-binding positions include 113 to 119 (STATQHG) and His134.

This sequence belongs to the WrbA family. FMN is required as a cofactor.

It catalyses the reaction a quinone + NADH + H(+) = a quinol + NAD(+). The catalysed reaction is a quinone + NADPH + H(+) = a quinol + NADP(+). The polypeptide is NAD(P)H dehydrogenase (quinone) (Rhodopseudomonas palustris (strain HaA2)).